The chain runs to 88 residues: Small ribosomal subunit protein uS17 (88 aa).

The protein belongs to the universal ribosomal protein uS17 family. As to quaternary structure, part of the 30S ribosomal subunit.

One of the primary rRNA binding proteins, it binds specifically to the 5'-end of 16S ribosomal RNA. The chain is Small ribosomal subunit protein uS17 from Synechococcus sp. (strain CC9311).